A 336-amino-acid chain; its full sequence is N-acetylornithine carbamoyltransferase (336 aa).

Carbamoyl phosphate is bound by residues 49–52, Trp-77, and Arg-112; that span reads SMRT. Glu-144 is a N(2)-acetyl-L-ornithine binding site. 148-151 provides a ligand contact to carbamoyl phosphate; it reads HPCQ. Positions 252 and 295 each coordinate N(2)-acetyl-L-ornithine. 294–295 contacts carbamoyl phosphate; sequence CL. Lys-302 carries the post-translational modification N6-carboxylysine. Arg-322 provides a ligand contact to carbamoyl phosphate.

Belongs to the aspartate/ornithine carbamoyltransferase superfamily. AOTCase family. As to quaternary structure, homotrimer.

The protein localises to the cytoplasm. The catalysed reaction is N(2)-acetyl-L-ornithine + carbamoyl phosphate = N(2)-acetyl-L-citrulline + phosphate + H(+). It functions in the pathway amino-acid biosynthesis; L-arginine biosynthesis. Its activity is regulated as follows. Carboxylation at Lys-302 increases the catalytic activity of the enzyme. Catalyzes the transfer of the carbamoyl group from carbamoyl phosphate to the delta-amino group of N(2)-acetyl-L-ornithine to produce N(2)-acetyl-L-citrulline. This is a step in an alternative arginine biosynthesis pathway. The enzyme has no activity with ornithine. The polypeptide is N-acetylornithine carbamoyltransferase (Xylella fastidiosa (strain 9a5c)).